A 141-amino-acid polypeptide reads, in one-letter code: Nucleoside diphosphate kinase (141 aa).

6 residues coordinate ATP: Lys-11, Phe-59, Arg-87, Thr-93, Arg-104, and Asn-114. The active-site Pros-phosphohistidine intermediate is the His-117.

Belongs to the NDK family. As to quaternary structure, homotetramer. Requires Mg(2+) as cofactor.

It is found in the cytoplasm. It catalyses the reaction a 2'-deoxyribonucleoside 5'-diphosphate + ATP = a 2'-deoxyribonucleoside 5'-triphosphate + ADP. It carries out the reaction a ribonucleoside 5'-diphosphate + ATP = a ribonucleoside 5'-triphosphate + ADP. Its function is as follows. Major role in the synthesis of nucleoside triphosphates other than ATP. The ATP gamma phosphate is transferred to the NDP beta phosphate via a ping-pong mechanism, using a phosphorylated active-site intermediate. In Paraburkholderia phytofirmans (strain DSM 17436 / LMG 22146 / PsJN) (Burkholderia phytofirmans), this protein is Nucleoside diphosphate kinase.